The primary structure comprises 772 residues: MLTSWGKTGFVLALALGGRAAENVITSDTFFYGESPPVYPSPEGTGAGDWASAYTKARAFVAQLSDDEKIQLTAGVSSNTACSGFIQPIDRLGFPGICMSDAGNGLRGTDYVNGWSSGISVGASWNRDLAHSRGAYMGQEYRKKGVNMILGPVVGPLGRVALGGRNWEGYAADPYLSGVLVSESVKGLQSQKVATSVKHFIANEQETNRNPTTDSERNVVQSVSSNIDDKTMHELYLWPFQDAVLAGATNLMCSYNRVNNSYACQNSKLLNGVLKTELGFQGYVVTDWGAQHAGIASANAGLDVVMPRSSTWNSNLTTAIANGTMEASRLDDMITRLMATWYYLDQDTEFPSPGVGMPSSPSAAHQAVIATSPEAKPILLQSAIESHVLVKNTDGALPLKSPKLISVFGYDAYAPLTYDLGNNFDFSSTRVRSDLYKNGTLYVGGGSGLNSPAYIDAPIDAIKRRAYEDGSSVLWDFTSENPSVDYTSDVCLVFINAYATEGYDRQALSDTHSDSVVENIAGNCSNTIVVVHNAGIRTAEAWVDHANVTAIIYAHLPGQDIGRALVRLLYGESNFSGRLPYTVAKNSSDYGSLLEPSQPEGKYQYFPQSDFSEGVYIDYRAFDKDGIVPQYAFGYGLSYTTFEYSDLKISKNSDGVPSIYPAKASILPGGNPHLFDELVTVTAKIRNTGNVDGQEVAQLYVGIPDGPVRQLRGFDKVLIESGSSATVTFSLTRRDLSTWDANAQEWSLQRGTYKIFVGRDSRDLPLEETLVF.

The first 20 residues, 1 to 20, serve as a signal peptide directing secretion; it reads MLTSWGKTGFVLALALGGRA. The N-linked (GlcNAc...) asparagine glycan is linked to N259. D287 is an active-site residue. N315, N322, N438, N523, N547, N574, and N586 each carry an N-linked (GlcNAc...) asparagine glycan.

The protein belongs to the glycosyl hydrolase 3 family.

The protein resides in the secreted. It carries out the reaction Hydrolysis of terminal, non-reducing beta-D-glucosyl residues with release of beta-D-glucose.. Its pathway is glycan metabolism; cellulose degradation. In terms of biological role, beta-glucosidases are one of a number of cellulolytic enzymes involved in the degradation of cellulosic biomass. Catalyzes the last step releasing glucose from the inhibitory cellobiose. This is Probable beta-glucosidase M (bglM) from Emericella nidulans (strain FGSC A4 / ATCC 38163 / CBS 112.46 / NRRL 194 / M139) (Aspergillus nidulans).